Here is a 146-residue protein sequence, read N- to C-terminus: Histone H2A.1 (146 aa).

Positions 118–146 are disordered; it reads SPAAAEKEAKSPKKKTSTKSPKKKVAAKE. Short sequence motifs (SPKK motif) lie at residues 128–131 and 137–140; these read SPKK. Over residues 129–146 the composition is skewed to basic residues; that stretch reads PKKKTSTKSPKKKVAAKE.

The protein belongs to the histone H2A family. In terms of assembly, the nucleosome is a histone octamer containing two molecules each of H2A, H2B, H3 and H4 assembled in one H3-H4 heterotetramer and two H2A-H2B heterodimers. The octamer wraps approximately 147 bp of DNA. Post-translationally, phosphorylated within its C-terminal part, probably at the SPKK motifs. As to expression, expressed preferentially in meristematic tissues of young seedlings, in stigma and ovary but not in pollen.

It is found in the nucleus. The protein localises to the chromosome. Core component of nucleosome. Nucleosomes wrap and compact DNA into chromatin, limiting DNA accessibility to the cellular machineries which require DNA as a template. Histones thereby play a central role in transcription regulation, DNA repair, DNA replication and chromosomal stability. DNA accessibility is regulated via a complex set of post-translational modifications of histones, also called histone code, and nucleosome remodeling. The chain is Histone H2A.1 (H2A-9) from Triticum aestivum (Wheat).